The chain runs to 379 residues: UDP-N-acetylglucosamine--N-acetylmuramyl-(pentapeptide) pyrophosphoryl-undecaprenol N-acetylglucosamine transferase (379 aa).

Residues 17–19 (TGG), Asn128, Arg169, Ser197, and Gln298 contribute to the UDP-N-acetyl-alpha-D-glucosamine site.

This sequence belongs to the glycosyltransferase 28 family. MurG subfamily.

The protein localises to the cell inner membrane. The enzyme catalyses di-trans,octa-cis-undecaprenyl diphospho-N-acetyl-alpha-D-muramoyl-L-alanyl-D-glutamyl-meso-2,6-diaminopimeloyl-D-alanyl-D-alanine + UDP-N-acetyl-alpha-D-glucosamine = di-trans,octa-cis-undecaprenyl diphospho-[N-acetyl-alpha-D-glucosaminyl-(1-&gt;4)]-N-acetyl-alpha-D-muramoyl-L-alanyl-D-glutamyl-meso-2,6-diaminopimeloyl-D-alanyl-D-alanine + UDP + H(+). The protein operates within cell wall biogenesis; peptidoglycan biosynthesis. Its function is as follows. Cell wall formation. Catalyzes the transfer of a GlcNAc subunit on undecaprenyl-pyrophosphoryl-MurNAc-pentapeptide (lipid intermediate I) to form undecaprenyl-pyrophosphoryl-MurNAc-(pentapeptide)GlcNAc (lipid intermediate II). The sequence is that of UDP-N-acetylglucosamine--N-acetylmuramyl-(pentapeptide) pyrophosphoryl-undecaprenol N-acetylglucosamine transferase from Brucella abortus (strain S19).